Here is a 475-residue protein sequence, read N- to C-terminus: 3-isopropylmalate dehydratase large subunit (475 aa).

[4Fe-4S] cluster-binding residues include C348, C408, and C411.

Belongs to the aconitase/IPM isomerase family. LeuC type 1 subfamily. As to quaternary structure, heterodimer of LeuC and LeuD. Requires [4Fe-4S] cluster as cofactor.

It catalyses the reaction (2R,3S)-3-isopropylmalate = (2S)-2-isopropylmalate. It functions in the pathway amino-acid biosynthesis; L-leucine biosynthesis; L-leucine from 3-methyl-2-oxobutanoate: step 2/4. Functionally, catalyzes the isomerization between 2-isopropylmalate and 3-isopropylmalate, via the formation of 2-isopropylmaleate. This Acidobacterium capsulatum (strain ATCC 51196 / DSM 11244 / BCRC 80197 / JCM 7670 / NBRC 15755 / NCIMB 13165 / 161) protein is 3-isopropylmalate dehydratase large subunit.